A 695-amino-acid polypeptide reads, in one-letter code: Elongation factor G (695 aa).

Residues 8 to 282 (EKTRNIGIMA…AVLDYLPAPT (275 aa)) enclose the tr-type G domain. GTP is bound by residues 17–24 (AHIDAGKT), 81–85 (DTPGH), and 135–138 (NKMD).

Belongs to the TRAFAC class translation factor GTPase superfamily. Classic translation factor GTPase family. EF-G/EF-2 subfamily.

The protein resides in the cytoplasm. Its function is as follows. Catalyzes the GTP-dependent ribosomal translocation step during translation elongation. During this step, the ribosome changes from the pre-translocational (PRE) to the post-translocational (POST) state as the newly formed A-site-bound peptidyl-tRNA and P-site-bound deacylated tRNA move to the P and E sites, respectively. Catalyzes the coordinated movement of the two tRNA molecules, the mRNA and conformational changes in the ribosome. In Listeria welshimeri serovar 6b (strain ATCC 35897 / DSM 20650 / CCUG 15529 / CIP 8149 / NCTC 11857 / SLCC 5334 / V8), this protein is Elongation factor G.